Reading from the N-terminus, the 314-residue chain is Hydroxyacyl-coenzyme A dehydrogenase, mitochondrial (314 aa).

The transit peptide at 1-12 directs the protein to the mitochondrion; it reads MAFVTRQFVRSM. Residues 34–39 and Asp-57 contribute to the NAD(+) site; that span reads GGGLMG. Ser-73 is a CoA binding site. Lys-75 carries the N6-acetyllysine modification. Position 80 (Lys-80) interacts with CoA. At Lys-80 the chain carries N6-succinyllysine. N6-acetyllysine; alternate occurs at positions 81 and 87. N6-succinyllysine; alternate is present on residues Lys-81 and Lys-87. Glu-122 lines the NAD(+) pocket. An N6-acetyllysine modification is found at Lys-125. Lys-127 is an NAD(+) binding site. The residue at position 127 (Lys-127) is an N6-(2-hydroxyisobutyryl)lysine. N6-acetyllysine; alternate is present on Lys-136. Lys-136 is subject to N6-succinyllysine; alternate. NAD(+)-binding residues include Ser-149 and Asn-173. Residue Ser-149 participates in CoA binding. Residue Lys-179 is modified to N6-acetyllysine. An N6-acetyllysine; alternate mark is found at Lys-185, Lys-192, and Lys-202. An N6-succinyllysine; alternate mark is found at Lys-185, Lys-192, and Lys-202. Lys-206 carries the post-translational modification N6-succinyllysine. Residues Lys-212 and Lys-241 each carry the N6-acetyllysine; alternate modification. Residues Lys-212 and Lys-241 each carry the N6-succinyllysine; alternate modification. NAD(+) is bound at residue Lys-305. Lys-312 is subject to N6-acetyllysine; alternate. Lys-312 is modified (N6-succinyllysine; alternate).

The protein belongs to the 3-hydroxyacyl-CoA dehydrogenase family. Homodimer. Interacts with GLUD1; this interaction inhibits the activation of glutamate dehydrogenase 1 (GLUD1). In terms of processing, succinylation at Lys-81, adjacent to a coenzyme A binding site. Desuccinylated by SIRT5.

The protein localises to the mitochondrion matrix. The catalysed reaction is a (3S)-3-hydroxyacyl-CoA + NAD(+) = a 3-oxoacyl-CoA + NADH + H(+). The enzyme catalyses (3S)-3-hydroxybutanoyl-CoA + NAD(+) = acetoacetyl-CoA + NADH + H(+). It carries out the reaction (3S)-hydroxydecanoyl-CoA + NAD(+) = 3-oxodecanoyl-CoA + NADH + H(+). It catalyses the reaction (3S)-hydroxyhexadecanoyl-CoA + NAD(+) = 3-oxohexadecanoyl-CoA + NADH + H(+). Its pathway is lipid metabolism; fatty acid beta-oxidation. Mitochondrial fatty acid beta-oxidation enzyme that catalyzes the third step of the beta-oxidation cycle for medium and short-chain 3-hydroxy fatty acyl-CoAs (C4 to C10). Plays a role in the control of insulin secretion by inhibiting the activation of glutamate dehydrogenase 1 (GLUD1), an enzyme that has an important role in regulating amino acid-induced insulin secretion. Plays a role in the maintenance of normal spermatogenesis through the reduction of fatty acid accumulation in the testes. The chain is Hydroxyacyl-coenzyme A dehydrogenase, mitochondrial (Hadh) from Rattus norvegicus (Rat).